A 326-amino-acid polypeptide reads, in one-letter code: Polycomb complex protein BMI-1 (326 aa).

An RING-type zinc finger spans residues 18 to 57 (CVLCGGYFIDATTIIECLHSFCKTCIVRYLETSKYCPICD). The Nuclear localization signal motif lies at 81–95 (KLVPGLFKNEMKRRR). Positions 162-182 (RYLRCPAAMTVMHLRKFLRSK) are interaction with PHC2. The segment at 164-228 (LRCPAAMTVM…GPLPLKYRVR (65 aa)) is interaction with E4F1. Residues 236-326 (ISHQRDGLTN…VNGSSATSSG (91 aa)) form a disordered region. 3 stretches are compositionally biased toward low complexity: residues 266–278 (PSTS…PSTP), 290–303 (SSTM…PSGN), and 315–326 (SSVNGSSATSSG).

Component of a PRC1-like complex. Identified in a PRC1-like HPRC-H complex with CBX2, CBX4, CBX8, PHC1, PHC2, PHC3 RING1 and RNF2. Interacts with RNF2/RING2. Interacts with RING1. Part of a complex that contains RNF2, UB2D3 and BMI1, where RNF2 and BMI1 form a tight heterodimer, and UB2D3 interacts only with RNF2. The complex composed of RNF2, UB2D3 and BMI1 binds nucleosomes, and has activity only with nucleosomal histone H2A. Interacts with CBX7 and CBX8. Interacts with SPOP. Part of a complex consisting of BMI1, CUL3 and SPOP. Interacts with E4F1. Interacts with PHC2. Interacts with zinc finger protein ZNF277. May be part of a complex including at least ZNF277, BMI1 and RNF2/RING2. Post-translationally, may be polyubiquitinated; which does not lead to proteasomal degradation. Monoubiquitinated.

It localises to the nucleus. The protein resides in the cytoplasm. Its function is as follows. Component of a Polycomb group (PcG) multiprotein PRC1-like complex, a complex class required to maintain the transcriptionally repressive state of many genes, including Hox genes, throughout development. PcG PRC1 complex acts via chromatin remodeling and modification of histones; it mediates monoubiquitination of histone H2A 'Lys-119', rendering chromatin heritably changed in its expressibility. The complex composed of RNF2, UB2D3 and BMI1 binds nucleosomes, and has activity only with nucleosomal histone H2A. In the PRC1-like complex, regulates the E3 ubiquitin-protein ligase activity of RNF2/RING2. The protein is Polycomb complex protein BMI-1 (BMI1) of Bos taurus (Bovine).